The sequence spans 652 residues: Acetyl-coenzyme A synthetase (652 aa).

Residues 189–192 (RGGK) and Ser311 contribute to the CoA site. ATP is bound by residues 387–389 (GEP), 411–416 (DTWWQT), Asp500, and Arg515. Ser523 is a binding site for CoA. Arg526 is a binding site for ATP. 3 residues coordinate Mg(2+): Val537, His539, and Ile542. Lys584 is a binding site for CoA. An N6-acetyllysine modification is found at Lys609.

It belongs to the ATP-dependent AMP-binding enzyme family. Mg(2+) is required as a cofactor. In terms of processing, acetylated. Deacetylation by the SIR2-homolog deacetylase activates the enzyme.

The catalysed reaction is acetate + ATP + CoA = acetyl-CoA + AMP + diphosphate. Its function is as follows. Catalyzes the conversion of acetate into acetyl-CoA (AcCoA), an essential intermediate at the junction of anabolic and catabolic pathways. AcsA undergoes a two-step reaction. In the first half reaction, AcsA combines acetate with ATP to form acetyl-adenylate (AcAMP) intermediate. In the second half reaction, it can then transfer the acetyl group from AcAMP to the sulfhydryl group of CoA, forming the product AcCoA. The polypeptide is Acetyl-coenzyme A synthetase (Bartonella quintana (strain Toulouse) (Rochalimaea quintana)).